Reading from the N-terminus, the 98-residue chain is NADH-ubiquinone oxidoreductase chain 4L (98 aa).

Helical transmembrane passes span 1 to 21, 29 to 49, and 61 to 81; these read MPVVYVNIFLAFIVSLTGLLI, SLLCLEGMMLSLFVMLTVTVL, and IILLVFAACEAALGLSLLVMV.

This sequence belongs to the complex I subunit 4L family. Core subunit of respiratory chain NADH dehydrogenase (Complex I) which is composed of 45 different subunits.

It is found in the mitochondrion inner membrane. The enzyme catalyses a ubiquinone + NADH + 5 H(+)(in) = a ubiquinol + NAD(+) + 4 H(+)(out). Functionally, core subunit of the mitochondrial membrane respiratory chain NADH dehydrogenase (Complex I) which catalyzes electron transfer from NADH through the respiratory chain, using ubiquinone as an electron acceptor. Part of the enzyme membrane arm which is embedded in the lipid bilayer and involved in proton translocation. This Helarctos malayanus (Malayan sun bear) protein is NADH-ubiquinone oxidoreductase chain 4L (MT-ND4L).